The chain runs to 621 residues: Phytoene desaturase (621 aa).

The N-terminal stretch at 1–23 (MPSTSKRPTAIVIGSGVGGVSTA) is a signal peptide. A disordered region spans residues 394 to 425 (HASQAHQLSASRNGHISSASPPDQPGLTPTEK). The span at 397–414 (QAHQLSASRNGHISSASP) shows a compositional bias: polar residues. Residues 598 to 618 (WEQWVSVLIYLLVGIFAWLWM) traverse the membrane as a helical segment.

It belongs to the carotenoid/retinoid oxidoreductase family. Requires NAD(+) as cofactor.

The protein localises to the membrane. The enzyme catalyses 15-cis-phytoene + 5 A = all-trans-3,4-didehydrolycopene + 5 AH2. Its pathway is carotenoid biosynthesis; lycopene biosynthesis. In terms of biological role, phytoene desaturase involved in the carotenoid biosynthesis pathway. Converts phytoene into 3,4-didehydrolycopene via the intermediary of phytofluene, zeta-carotene, neurosporene and lycopene, by introducing up to five double bonds into phytoene. The protein is Phytoene desaturase (PDH1) of Cercospora nicotianae (Barn spot disease fungus).